We begin with the raw amino-acid sequence, 309 residues long: Pyrroline-5-carboxylate reductase 1, mitochondrial (309 aa).

Serine 2 is subject to N-acetylserine. NADP(+) is bound by residues 6–11 (IGAGQL) and serine 34. NADPH contacts are provided by alanine 8, glutamine 10, leucine 11, serine 34, aspartate 36, asparagine 56, valine 70, lysine 71, and alanine 97. Residues asparagine 56, 69–72 (AVKP), and 95–97 (CAA) contribute to the NADP(+) site. Residue glutamate 164 participates in L-proline binding. Residue asparagine 230 coordinates NADPH. 2 residues coordinate L-proline: alanine 237 and threonine 238. Phosphoserine occurs at positions 278 and 301.

This sequence belongs to the pyrroline-5-carboxylate reductase family. Homodecamer; composed of 5 homodimers. Interacts with LTO1. Highly expressed in osteoblasts and skin.

It localises to the mitochondrion. The enzyme catalyses L-proline + NADP(+) = (S)-1-pyrroline-5-carboxylate + NADPH + 2 H(+). It carries out the reaction L-proline + NAD(+) = (S)-1-pyrroline-5-carboxylate + NADH + 2 H(+). The protein operates within amino-acid biosynthesis; L-proline biosynthesis; L-proline from L-glutamate 5-semialdehyde: step 1/1. Functionally, oxidoreductase that catalyzes the last step in proline biosynthesis, which corresponds to the reduction of pyrroline-5-carboxylate to L-proline using NAD(P)H. At physiologic concentrations, has higher specific activity in the presence of NADH. Involved in the cellular response to oxidative stress. In Mus musculus (Mouse), this protein is Pyrroline-5-carboxylate reductase 1, mitochondrial.